The chain runs to 911 residues: Desmoglein-1-gamma (911 aa).

The signal sequence occupies residues 1–23 (MDWHSFRIAALLLTSLVVLEVNS). Positions 24-49 (EFQIQVRDHNAKNGTIKWHSIRRQKR) are excised as a propeptide. Cadherin domains follow at residues 50-157 (EWIK…PPVF), 158-269 (SMTT…IPYL), and 270-389 (EQSS…QPGS). The Extracellular segment spans residues 50-519 (EWIKFAAACR…PNVDNVHFGP (470 aa)). N-linked (GlcNAc...) (high mannose) asparagine glycosylation occurs at Asn-110. The N-linked (GlcNAc...) asparagine glycan is linked to Asn-180. A glycan (N-linked (GlcNAc...) asparagine) is linked at Asn-401. A helical membrane pass occupies residues 520–540 (AGIGLLIMGFLVLGLVPFLLI). Over 541-911 (SCDCGGAPGG…GMIGNLSIPP (371 aa)) the chain is Cytoplasmic. 4 Desmoglein repeat repeats span residues 783–809 (AYPS…TVRE), 810–839 (SYTT…ERVV), 840–869 (GPIS…ERVI), and 870–897 (APGS…ERVI). The stretch at 898 to 911 (QPTSGMIGNLSIPP) is one Desmoglein repeat 5; truncated repeat.

As to quaternary structure, interacts with DSC3; there is evidence to suggest that the interaction promotes cell-cell adhesion of keratinocytes. As to expression, expressed in epidermis, brain, liver, skeletal, muscle and testis.

The protein resides in the cell membrane. Its subcellular location is the cell junction. The protein localises to the desmosome. It localises to the cytoplasm. It is found in the nucleus. In terms of biological role, component of intercellular desmosome junctions. Involved in the interaction of plaque proteins and intermediate filaments mediating cell-cell adhesion. The sequence is that of Desmoglein-1-gamma (Dsg1c) from Mus musculus (Mouse).